The primary structure comprises 318 residues: UPF0725 protein At3g44770 (318 aa).

It belongs to the UPF0725 (EMB2204) family.

The sequence is that of UPF0725 protein At3g44770 from Arabidopsis thaliana (Mouse-ear cress).